The primary structure comprises 119 residues: Ribosome-binding factor A (119 aa).

The protein belongs to the RbfA family. In terms of assembly, monomer. Binds 30S ribosomal subunits, but not 50S ribosomal subunits or 70S ribosomes.

The protein localises to the cytoplasm. Functionally, one of several proteins that assist in the late maturation steps of the functional core of the 30S ribosomal subunit. Associates with free 30S ribosomal subunits (but not with 30S subunits that are part of 70S ribosomes or polysomes). Required for efficient processing of 16S rRNA. May interact with the 5'-terminal helix region of 16S rRNA. The sequence is that of Ribosome-binding factor A from Coxiella burnetii (strain CbuK_Q154) (Coxiella burnetii (strain Q154)).